Here is a 393-residue protein sequence, read N- to C-terminus: Flavohemoprotein (393 aa).

One can recognise a Globin domain in the interval 1-139 (MLSNAQRALI…LADLLIEAEE (139 aa)). His-85 serves as a coordination point for heme b. Catalysis depends on charge relay system residues Tyr-95 and Glu-138. The tract at residues 150–393 (GGWRGVRRFR…FFGPAAALDA (244 aa)) is reductase. Residues 153 to 256 (RGVRRFRVAR…FPPAGDFVLR (104 aa)) form the FAD-binding FR-type domain. FAD is bound by residues Tyr-191 and 205-208 (RNYS). 268–273 (GVGITP) is an NADP(+) binding site. Position 384-387 (384-387 (FFGP)) interacts with FAD.

It belongs to the globin family. Two-domain flavohemoproteins subfamily. In the C-terminal section; belongs to the flavoprotein pyridine nucleotide cytochrome reductase family. Requires heme b as cofactor. It depends on FAD as a cofactor.

It catalyses the reaction 2 nitric oxide + NADPH + 2 O2 = 2 nitrate + NADP(+) + H(+). It carries out the reaction 2 nitric oxide + NADH + 2 O2 = 2 nitrate + NAD(+) + H(+). Functionally, is involved in NO detoxification in an aerobic process, termed nitric oxide dioxygenase (NOD) reaction that utilizes O(2) and NAD(P)H to convert NO to nitrate, which protects the bacterium from various noxious nitrogen compounds. Therefore, plays a central role in the inducible response to nitrosative stress. This chain is Flavohemoprotein, found in Pseudomonas aeruginosa (strain ATCC 15692 / DSM 22644 / CIP 104116 / JCM 14847 / LMG 12228 / 1C / PRS 101 / PAO1).